Here is an 808-residue protein sequence, read N- to C-terminus: Glutamate receptor 1.1 (808 aa).

An N-terminal signal peptide occupies residues 1–19 (MEILFSISILALLFSGVVA). Topologically, residues 20 to 541 (APSDDDVFEE…MWTFFDPFEK (522 aa)) are extracellular. 3 N-linked (GlcNAc...) asparagine glycosylation sites follow: Asn-288, Asn-339, and Asn-504. Residues 542–562 (SLWLASGAFFVLTGIVVWLVE) traverse the membrane as a helical segment. The Cytoplasmic segment spans residues 563–570 (RSVNPEFQ). Residues 571–591 (GSWGQQLSMMLWFGFSTIVFA) traverse the membrane as a helical segment. At 592-602 (HREKLQKMSSR) the chain is on the cytoplasmic side. A helical membrane pass occupies residues 603–623 (FLVIVWVFVVLILTSSYSANL). The Extracellular segment spans residues 624–771 (TSTKTISRMQ…SKRFTFRELR (148 aa)). The helical transmembrane segment at 772–792 (GLFIIAGAAHVLVLALHLFHT) threads the bilayer. The Cytoplasmic segment spans residues 793–808 (RQEVSRLCTKLQSFYK).

This sequence belongs to the glutamate-gated ion channel (TC 1.A.10.1) family. As to quaternary structure, may form heteromers. Expressed predominantly in roots. First detected in the root-shoot junction, and later in lateral roots and at the margin of matures leaves.

Its subcellular location is the membrane. Functionally, glutamate-gated receptor that probably acts as a non-selective cation channel. Can transport sodium, potassium, and calcium ions. Functions as a carbon and nitrogen regulator and/or sensor that regulates carbon and nitrogen metabolism and distinct physiological process such as germination through the control of acid abscisic (ABA) biosynthesis. May be involved in light-signal transduction and calcium homeostasis via the regulation of calcium influx into cells. Seems required for the regulation of the abscisic acid (ABA) signaling pathway that modulates many aspects of plant physiology such as seed germination and response to drought (e.g. stomata opening). This chain is Glutamate receptor 1.1 (GLR1.1), found in Arabidopsis thaliana (Mouse-ear cress).